Reading from the N-terminus, the 464-residue chain is Soluble pyridine nucleotide transhydrogenase (464 aa).

35 to 44 contacts FAD; sequence DSRREVGGNC.

It belongs to the class-I pyridine nucleotide-disulfide oxidoreductase family. The cofactor is FAD.

It is found in the cytoplasm. It carries out the reaction NAD(+) + NADPH = NADH + NADP(+). In terms of biological role, conversion of NADPH, generated by peripheral catabolic pathways, to NADH, which can enter the respiratory chain for energy generation. This is Soluble pyridine nucleotide transhydrogenase from Pseudomonas syringae pv. tomato (strain ATCC BAA-871 / DC3000).